The primary structure comprises 155 residues: Endoribonuclease YbeY (155 aa).

The tract at residues Ser64–Leu84 is disordered. Zn(2+)-binding residues include His115, His119, and His125.

It belongs to the endoribonuclease YbeY family. The cofactor is Zn(2+).

Its subcellular location is the cytoplasm. Functionally, single strand-specific metallo-endoribonuclease involved in late-stage 70S ribosome quality control and in maturation of the 3' terminus of the 16S rRNA. The polypeptide is Endoribonuclease YbeY (Cutibacterium acnes (strain DSM 16379 / KPA171202) (Propionibacterium acnes)).